Consider the following 326-residue polypeptide: Transcription factor WRKY45-1 (326 aa).

Disordered stretches follow at residues 67-114 (GGEG…SVVV) and 252-288 (GVGSSDQEEVLSSLTPGSSAARGGGGGGGVAGPFGPD). Positions 112 to 180 (VVVKNLDDGQ…YIGEHTCRDP (69 aa)) form a DNA-binding region, WRKY. Residues 273-283 (RGGGGGGGVAG) are compositionally biased toward gly residues.

The protein belongs to the WRKY group III family. As to expression, expressed in aleurone cells.

It is found in the nucleus. Functionally, transcriptional activator involved in defense responses against pathogens. Acts as a positive regulator of defense responses against the rice blast fungus Magnaporthe oryzae. Acts through W-boxes, which are cis-elements that are enriched in the promoters of several defense-related genes. Plays an important role in the benzothiadiazole-induced disease resistance by mediating salicylic acid (SA) defense signaling pathway, independently of the disease resistance gene NPR1/NH1. Acts as a negative regulator of defense responses against the bacterial blight Xanthomonas oryzae pv oryzae (Xoo) and the bacterial streak Xanthomonas oryzae pv oryzicola (Xoc). Acts downstream of abscisic acid (ABA) signaling in response to the rice blast fungus. ABA is a negative regulator of defense responses that interacts antagonistically with salicylic acid (SA) signaling pathway. Acts as a negative regulator of ABA signaling that suppresses growth of seedlings. Does not seem to be involved in the regulation of salt stress response. Acts as a negative regulator of cold stress response. Acts as a negative regulator of drought stress response. The chain is Transcription factor WRKY45-1 from Oryza sativa subsp. japonica (Rice).